The sequence spans 731 residues: Two pore channel protein 2 (731 aa).

At 1-68 (MAAEEQPLLG…RWYYSNVCQR (68 aa)) the chain is on the cytoplasmic side. The chain crosses the membrane as a helical span at residues 69 to 89 (VLGFIIFLILILAFVEVPSSF). Residues 90 to 111 (TKTADVRYRSQPWQPPCGLTET) are Extracellular-facing. A helical transmembrane segment spans residues 112–132 (IEAFCLLAFLVDLSVKGYLVG). The Cytoplasmic portion of the chain corresponds to 133 to 139 (QAQLQQN). The helical transmembrane segment at 140 to 160 (LWLLAYFMVLVVSVVDWIVSL) threads the bilayer. At 161–167 (SLACEEP) the chain is on the extracellular side. Residues 168 to 188 (LRMRRLLRPFFLLQNSSMMKK) form a helical membrane-spanning segment. The interaction with phosphatidylinositol 3,5-bisphosphate stretch occupies residues 187-191 (KKTLK). Topologically, residues 189–203 (TLKCIRWSLPEMASV) are cytoplasmic. A helical transmembrane segment spans residues 204–224 (GLLLAIHLCLFTIIGMLLFTI). Residues 225–238 (GEKDEAQDQERLAY) lie on the Extracellular side of the membrane. Residues 239-263 (FRNLPEALTSLLVLLTTSNNPDVMI) constitute an intramembrane region (helical; Pore-forming). The Extracellular portion of the chain corresponds to 264 to 270 (PAYTQNR). A helical transmembrane segment spans residues 271 to 291 (AFALFFIVFTLIGSLFLMNLL). Over 292 to 417 (TAIIYNQFRG…TAQFIFSHHY (126 aa)) the chain is Cytoplasmic. A helical transmembrane segment spans residues 418-438 (FDYLGNLVALGNLLSICVFLV). Residues 439–449 (LDSDLLPGERD) lie on the Extracellular side of the membrane. A helical transmembrane segment spans residues 450-470 (DFVLGILDYIFILYYLLELLF). Residues 471–486 (KVFALGLPGYLSYHSN) are Cytoplasmic-facing. Residues 487–507 (VFDGLLTIILLVSEICTLAVY) traverse the membrane as a helical segment. Over 508–524 (RLPHSGWKPEQYGPLSL) the chain is Extracellular. The helical transmembrane segment at 525 to 542 (WDMTRLMNTLIVFRFLRI) threads the bilayer. The Cytoplasmic segment spans residues 543 to 564 (IPNIKPMAEVANTILGLIPNLR). A helical transmembrane segment spans residues 565–585 (AFGGILVVAYYVFAMIGINLF). Over 586-618 (RGVIVPPGNSSLVPDNNSAVCGSFEQLGYWPNN) the chain is Extracellular. Residues N594 and N601 are each glycosylated (N-linked (GlcNAc...) asparagine). Positions 619–641 (FDDFAAALITLWNVMVVNNWQVI) form an intramembrane region, helical; Pore-forming. The Extracellular portion of the chain corresponds to 642-656 (LEAYKRYAGPWSMVY). The helical transmembrane segment at 657 to 677 (FVLWWLVSSVIWINLFLALLL) threads the bilayer. The Cytoplasmic portion of the chain corresponds to 678 to 731 (ENFLHRWDPQGHKQLLVGTKQMSVELMFRDILEEPKEEELMEKLHKHPHLHLCR).

This sequence belongs to the calcium channel alpha-1 subunit (TC 1.A.1.11) family. Two pore calcium channel subfamily. In terms of assembly, homodimer. Interacts with LRRK2. Interacts with HAX1. Interacts with MTOR; the interaction is required for TPCN2 ATP sensitivity. Found in a complex with LSM12, TPCN1 and TPCN2. Interacts with LSM12. In terms of processing, N-glycosylated. Widely expressed. Highly expressed in macrophages. Expressed in pigmented cells.

The protein localises to the late endosome membrane. It localises to the lysosome membrane. The protein resides in the melanosome membrane. The enzyme catalyses Ca(2+)(in) = Ca(2+)(out). It carries out the reaction Na(+)(in) = Na(+)(out). Regulated by Mg(2+) ions, cytosolic Mg(2+) selectively inhibits outward current while lysosomal Mg(2+) modestly inhibits both the outward and inward currents. In the absence of Mg(2+), NAADP readily activates TPCN2, with properties similar to PI(3,5)P2. Na(+) current is inhibited by ATP in a MTORC-dependent manner. ATP sensitivity is independent of PI(3,5)P2. Both current elicited by PI(3,5)P2 as well as NAADP are inhibited by tetrandrine. In terms of biological role, intracellular channel initially characterized as a non-selective Ca(2+)-permeable channel activated by NAADP (nicotinic acid adenine dinucleotide phosphate), it is also a highly-selective Na(+) channel activated directly by PI(3,5)P2 (phosphatidylinositol 3,5-bisphosphate). Localizes to the lysosomal and late endosome membranes where it regulates organellar membrane excitability, membrane trafficking, and pH homeostasis. Is associated with a plethora of physiological processes, including mTOR-dependent nutrient sensing, skin pigmentation and autophagy. Ion selectivity is not fixed but rather agonist-dependent and under defined ionic conditions, can be readily activated by both NAADP and PI(3,5)P2. As calcium channel, it increases the pH in the lysosomal lumen, as sodium channel, it promotes lysosomal exocytosis. Plays a crucial role in endolysosomal trafficking in the endolysosomal degradation pathway and is potentially involved in the homeostatic control of many macromolecules and cell metabolites. Also expressed in melanosomes of pigmented cells where mediates a Ca(2+) channel and/or PI(3,5)P2-activated melanosomal Na(+) channel to acidify pH and inhibit tyrosinase activity required for melanogenesis and pigmentation. Unlike the voltage-dependent TPCN1, TPCN2 is voltage independent and can be activated solely by PI(3,5)P2 binding. In contrast, PI(4,5)P2, PI(3,4)P2, PI(3)P and PI(5)P have no obvious effect on channel activation. (Microbial infection) During Ebola virus (EBOV) infection, controls the movement of endosomes containing virus particles and is required by EBOV to escape from the endosomal network into the cell cytoplasm. The chain is Two pore channel protein 2 from Mus musculus (Mouse).